We begin with the raw amino-acid sequence, 449 residues long: Doublesex- and mab-3-related transcription factor A2 (449 aa).

Residues 57 to 104 (CARCRNHGVVSALKGHKRYCRWKDCMCAKCTLIAERQRVMAAQVALRR) constitute a DNA-binding region (DM). The segment at 166–259 (KNQLSGSATP…PSPSSAASRH (94 aa)) is disordered. Over residues 167-177 (NQLSGSATPQP) the composition is skewed to polar residues. The segment covering 230–240 (GSVSSIGSDSG) has biased composition (low complexity). The 36-residue stretch at 260–295 (MNAIDILTRVFPSHKRSVLELVLQGCGKDVVQAIEQ) folds into the DMA domain.

The protein belongs to the DMRT family.

The protein localises to the nucleus. In terms of biological role, may be involved in sexual development. The chain is Doublesex- and mab-3-related transcription factor A2 (dmrta2) from Oreochromis niloticus (Nile tilapia).